Reading from the N-terminus, the 362-residue chain is MAHHDPIGLIAPNAGLAQLNERSREIFRQIVESYLATGEPVGSRNISRLITVPLSPASVRNVMSDLEQLGLIYAPHTSAGRLPTELGLRFFVDALMQVGDLTEPERQSIQAQLASVGRAQSVEAALGEALTRLSGLTRAAAVVLTAKSNARLKHIEFVRLEPERALVVLVSEDGQVENRVLTLAAGVPSSALIEASNFLNARIRGRTLAEARLELETALSQDRAELDQLTQKVISAGIASWSGGANDDRQLIVRGHANLLEDLHALDDLERVRLLFDDLETKRGVIDLLGRAESAEGVRIFIGSENKLFSLSGSSTIIAPYSDGAGHIVGVLGVIGPTRLNYARVIPMVDYAARVVSQMLGG.

The protein belongs to the HrcA family.

Functionally, negative regulator of class I heat shock genes (grpE-dnaK-dnaJ and groELS operons). Prevents heat-shock induction of these operons. The chain is Heat-inducible transcription repressor HrcA from Rhodopseudomonas palustris (strain BisB18).